Consider the following 510-residue polypeptide: D-alanine--D-alanyl carrier protein ligase (510 aa).

157-158 (TS) contributes to the ATP binding site. A D-alanine-binding site is contributed by aspartate 202. Position 297–302 (297–302 (NTYGPT)) interacts with ATP. Valine 306 contributes to the D-alanine binding site. Residues aspartate 389 and lysine 498 each contribute to the ATP site. Lysine 498 provides a ligand contact to D-alanine.

It belongs to the ATP-dependent AMP-binding enzyme family. DltA subfamily.

The protein resides in the cytoplasm. It carries out the reaction holo-[D-alanyl-carrier protein] + D-alanine + ATP = D-alanyl-[D-alanyl-carrier protein] + AMP + diphosphate. Its pathway is cell wall biogenesis; lipoteichoic acid biosynthesis. Its function is as follows. Catalyzes the first step in the D-alanylation of lipoteichoic acid (LTA), the activation of D-alanine and its transfer onto the D-alanyl carrier protein (Dcp) DltC. In an ATP-dependent two-step reaction, forms a high energy D-alanyl-AMP intermediate, followed by transfer of the D-alanyl residue as a thiol ester to the phosphopantheinyl prosthetic group of the Dcp. D-alanylation of LTA plays an important role in modulating the properties of the cell wall in Gram-positive bacteria, influencing the net charge of the cell wall. This Listeria monocytogenes serotype 4a (strain HCC23) protein is D-alanine--D-alanyl carrier protein ligase.